Reading from the N-terminus, the 239-residue chain is Ribosomal RNA large subunit methyltransferase E (239 aa).

The segment at 1–20 (MTKAPIAGNRTGRKLGQRVK) is disordered. The segment covering 11–20 (TGRKLGQRVK) has biased composition (basic residues). 5 residues coordinate S-adenosyl-L-methionine: Gly-81, Trp-83, Asp-104, Asp-120, and Asp-144. The Proton acceptor role is filled by Lys-184.

It belongs to the class I-like SAM-binding methyltransferase superfamily. RNA methyltransferase RlmE family.

It localises to the cytoplasm. It carries out the reaction uridine(2552) in 23S rRNA + S-adenosyl-L-methionine = 2'-O-methyluridine(2552) in 23S rRNA + S-adenosyl-L-homocysteine + H(+). In terms of biological role, specifically methylates the uridine in position 2552 of 23S rRNA at the 2'-O position of the ribose in the fully assembled 50S ribosomal subunit. The chain is Ribosomal RNA large subunit methyltransferase E from Rhizobium johnstonii (strain DSM 114642 / LMG 32736 / 3841) (Rhizobium leguminosarum bv. viciae).